We begin with the raw amino-acid sequence, 329 residues long: MPWWTDALYWLPRGVSWSDMYNKTTEPGYMYPHYSHLWMTVLTGISLIIYRFVFENYIFVPLAHFLSRKNPPETRRGTLDREKKYSRMAECAMRALYYTISFVCGLYLVLHESHLYDITECWRNWPFHPIPNAVAWYYWIQGGFYIALVFGILFLDAKRSDFWQMLVHHFITLALIGVSWTMNMVRVGTLILVSHDAVDILIDVGKILRYEQFETALTICFAGVLFVWVATRLVYYPFWIIRSVWFDAPALIQDDYEWLNFDQQPQAPRFIMLLLTALLILHIFWAYILFKIAYDTIQEGVVDDVREDFDEQSLVNREKAKQQNKNKDD.

N-linked (GlcNAc...) asparagine glycosylation is present at asparagine 22. 7 consecutive transmembrane segments (helical) span residues 41-61 (VLTGISLIIYRFVFENYIFVP), 95-115 (ALYYTISFVCGLYLVLHESHL), 134-154 (VAWYYWIQGGFYIALVFGILF), 162-182 (FWQMLVHHFITLALIGVSWTM), 187-207 (VGTLILVSHDAVDILIDVGKI), 221-241 (FAGVLFVWVATRLVYYPFWII), and 270-290 (FIMLLLTALLILHIFWAYILF). Residues 86–298 (SRMAECAMRA…LFKIAYDTIQ (213 aa)) enclose the TLC domain.

The protein belongs to the sphingosine N-acyltransferase family. Strong expression in the gut, the posterior bulb of the pharynx, the hypoderm, and unidentified cells of the head and the tail.

The protein localises to the membrane. The enzyme catalyses a very long-chain fatty acyl-CoA + a sphingoid base = an N-(very-long-chain fatty acyl)-sphingoid base + CoA + H(+). It catalyses the reaction a fatty acyl-CoA + sphinganine = an N-acylsphinganine + CoA + H(+). It carries out the reaction docosanoyl-CoA + sphinganine = N-docosanoylsphinganine + CoA + H(+). The catalysed reaction is sphinganine + tetradecanoyl-CoA = N-(tetradecanoyl)-sphinganine + CoA + H(+). The enzyme catalyses eicosanoyl-CoA + sphinganine = N-eicosanoylsphinganine + CoA + H(+). It catalyses the reaction 15-methylhexadecasphinganine + a fatty acyl-CoA = an N-acyl-15-methylhexadecasphinganine + CoA + H(+). It functions in the pathway lipid metabolism; sphingolipid metabolism. Its function is as follows. Catalyzes the acylation of sphingoid bases to form ceramides, which are key players in cell signaling events such as tolerances to heat, oxidation, and ultraviolet stress. C.elegans contain specific sphingoid bases, which are unique or different in structure compared to the sphingoid bases found in other animals. Two examples of these distinctive compounds are: 15-methylhexadecasphinganine and 15-methylhexadecasphing-4-enine. Exhibits substrate preference for long and very long fatty acyl-coA chains (C20-23). Required for adaptation of the nematode to anoxia. Anoxia tolerance may require one or more of the ceramide species that are either specifically or preferentially synthesized by HYL-2, and seems to be affected by a pathway that is parallel to that involving daf-2. The chain is Ceramide synthase hyl-2 (hyl-2) from Caenorhabditis elegans.